Here is a 238-residue protein sequence, read N- to C-terminus: Ribonuclease HII (238 aa).

The RNase H type-2 domain occupies 12–197 (GIVAGVDEAG…VLELLTDDLL (186 aa)). A divalent metal cation contacts are provided by aspartate 18, glutamate 19, and aspartate 107.

Belongs to the RNase HII family. It depends on Mn(2+) as a cofactor. Mg(2+) serves as cofactor.

Its subcellular location is the cytoplasm. The catalysed reaction is Endonucleolytic cleavage to 5'-phosphomonoester.. Endonuclease that specifically degrades the RNA of RNA-DNA hybrids. This is Ribonuclease HII from Thermotoga petrophila (strain ATCC BAA-488 / DSM 13995 / JCM 10881 / RKU-1).